The sequence spans 80 residues: Small ribosomal subunit protein uS17 (80 aa).

This sequence belongs to the universal ribosomal protein uS17 family. Part of the 30S ribosomal subunit.

Functionally, one of the primary rRNA binding proteins, it binds specifically to the 5'-end of 16S ribosomal RNA. This chain is Small ribosomal subunit protein uS17, found in Brucella suis (strain ATCC 23445 / NCTC 10510).